Consider the following 431-residue polypeptide: Keratin, type I cytoskeletal 40 (431 aa).

The head stretch occupies residues 1–89 (MTSDCSSTHC…CEDGVFTSNE (89 aa)). The IF rod domain occupies 89–400 (EKETMQFLND…GLLDSEDSRL (312 aa)). The tract at residues 90 to 124 (KETMQFLNDRLASYLEKVRSLEETNAELESRIQEQ) is coil 1A. The linker 1 stretch occupies residues 125–135 (CEQDIPMVCPD). Residues 136 to 236 (YQRYFNTIED…HEEEVNLLRE (101 aa)) are coil 1B. A linker 12 region spans residues 237-252 (QLGDRLSVELDTAPTL). The interval 253 to 396 (DLNRVLDEMR…NTYWGLLDSE (144 aa)) is coil 2. Residues 397 to 431 (DSRLSCSPCSTTCTSSNTCEPCSAYVICTVENCCL) are tail.

The protein belongs to the intermediate filament family. Heterotetramer of two type I and two type II keratins. Expressed in skin and scalp. Also very weakly expressed in tongue, breast, colon and small intestine. In the hair follicle, it is specifically present in the upper hair cuticle. Not present in the upper cortex (at protein level).

In terms of biological role, may play a role in late hair differentiation. In Homo sapiens (Human), this protein is Keratin, type I cytoskeletal 40 (KRT40).